A 2152-amino-acid polypeptide reads, in one-letter code: Oxygen-regulated protein 1 (2152 aa).

Residues 1–19 show a composition bias toward polar residues; sequence MSDTPSTGFSIIHPTSSED. The disordered stretch occupies residues 1–25; that stretch reads MSDTPSTGFSIIHPTSSEDQVPPPR. Doublecortin domains are found at residues 36–118 and 154–233; these read KRIS…VDLD and RSLV…GNYD. Disordered regions lie at residues 353–375, 1435–1455, and 1587–1616; these read VSKT…RTES, DMEE…MTSS, and DWSD…ELAQ.

Interacts (via the doublecortin domains) with microtubules. Interacts with RP1L1. Interacts with MAK.

The protein localises to the cytoplasm. The protein resides in the cytoskeleton. Its subcellular location is the cilium axoneme. It is found in the cell projection. It localises to the cilium. The protein localises to the photoreceptor outer segment. Microtubule-associated protein regulating the stability and length of the microtubule-based axoneme of photoreceptors. Required for the differentiation of photoreceptor cells, it plays a role in the organization of the outer segment of rod and cone photoreceptors ensuring the correct orientation and higher-order stacking of outer segment disks along the photoreceptor axoneme. The polypeptide is Oxygen-regulated protein 1 (RP1) (Papio hamadryas (Hamadryas baboon)).